The following is a 142-amino-acid chain: Thioredoxin-like protein YLS8 (142 aa).

This sequence belongs to the DIM1 family. In terms of tissue distribution, expressed in roots, leaves, stems, cauline leaves and flowers.

The chain is Thioredoxin-like protein YLS8 (YLS8) from Arabidopsis thaliana (Mouse-ear cress).